We begin with the raw amino-acid sequence, 139 residues long: Large ribosomal subunit protein uL16 (139 aa).

This sequence belongs to the universal ribosomal protein uL16 family. As to quaternary structure, part of the 50S ribosomal subunit.

In terms of biological role, binds 23S rRNA and is also seen to make contacts with the A and possibly P site tRNAs. This is Large ribosomal subunit protein uL16 from Picosynechococcus sp. (strain ATCC 27264 / PCC 7002 / PR-6) (Agmenellum quadruplicatum).